The chain runs to 223 residues: uncharacterized protein (223 aa).

Basic residues predominate over residues 1–11 (MLWVQRKRRRK). Positions 1-37 (MLWVQRKRRRKETSECPSDKDKSPESHKAKNESWIKS) are disordered. Basic and acidic residues predominate over residues 12-37 (ETSECPSDKDKSPESHKAKNESWIKS). Residue Ser43 is modified to Phosphoserine. 2 disordered regions span residues 49 to 73 (LDNNASASGNATQTESGSEEVSSTV) and 196 to 223 (THTFYGHSHHSHHGHPSHQSHSLPNRRH). Residues 51–61 (NNASASGNATQ) show a composition bias toward polar residues. The segment covering 62-73 (TESGSEEVSSTV) has biased composition (low complexity). Positions 202–223 (HSHHSHHGHPSHQSHSLPNRRH) are enriched in basic residues.

This is an uncharacterized protein from Homo sapiens (Human).